Here is a 209-residue protein sequence, read N- to C-terminus: Imidazole glycerol phosphate synthase subunit HisH (209 aa).

Residues 4-209 (PVVVFEYGSG…RLLANWIGSL (206 aa)) form the Glutamine amidotransferase type-1 domain. Cysteine 82 functions as the Nucleophile in the catalytic mechanism. Residues histidine 190 and glutamate 192 contribute to the active site.

As to quaternary structure, heterodimer of HisH and HisF.

Its subcellular location is the cytoplasm. The catalysed reaction is 5-[(5-phospho-1-deoxy-D-ribulos-1-ylimino)methylamino]-1-(5-phospho-beta-D-ribosyl)imidazole-4-carboxamide + L-glutamine = D-erythro-1-(imidazol-4-yl)glycerol 3-phosphate + 5-amino-1-(5-phospho-beta-D-ribosyl)imidazole-4-carboxamide + L-glutamate + H(+). The enzyme catalyses L-glutamine + H2O = L-glutamate + NH4(+). It participates in amino-acid biosynthesis; L-histidine biosynthesis; L-histidine from 5-phospho-alpha-D-ribose 1-diphosphate: step 5/9. Functionally, IGPS catalyzes the conversion of PRFAR and glutamine to IGP, AICAR and glutamate. The HisH subunit catalyzes the hydrolysis of glutamine to glutamate and ammonia as part of the synthesis of IGP and AICAR. The resulting ammonia molecule is channeled to the active site of HisF. This is Imidazole glycerol phosphate synthase subunit HisH from Leifsonia xyli subsp. xyli (strain CTCB07).